The sequence spans 217 residues: Proteasome subunit beta type-6-B like protein (217 aa).

Residues 1-16 (MERHFMDSQIKGVSTG) constitute a propeptide, removed in mature form. The active-site Nucleophile is Thr-17.

Belongs to the peptidase T1B family. In terms of assembly, the 26S proteasome consists of a 20S proteasome core and two 19S regulatory subunits. The 20S proteasome core is composed of 28 subunits that are arranged in four stacked rings, resulting in a barrel-shaped structure. The two end rings are each formed by seven alpha subunits, and the two central rings are each formed by seven beta subunits. The catalytic chamber with the active sites is on the inside of the barrel.

Its subcellular location is the cytoplasm. It localises to the nucleus. The catalysed reaction is Cleavage of peptide bonds with very broad specificity.. Functionally, the proteasome is a multicatalytic proteinase complex which is characterized by its ability to cleave peptides with Arg, Phe, Tyr, Leu, and Glu adjacent to the leaving group at neutral or slightly basic pH. The proteasome has an ATP-dependent proteolytic activity. This subunit is involved in antigen processing to generate class I binding peptides. The sequence is that of Proteasome subunit beta type-6-B like protein (psmb6l-b) from Salmo salar (Atlantic salmon).